Here is a 604-residue protein sequence, read N- to C-terminus: Lipoma-preferred partner homolog (604 aa).

2 disordered regions span residues 31-96 and 129-381; these read TPSI…LDDV and DLES…AFRP. Over residues 32-41 the composition is skewed to polar residues; that stretch reads PSISVSTQQT. Low complexity-rich tracts occupy residues 42–53 and 143–161; these read PKKFAPVVAPKP and GSGT…TPVT. Positions 207 to 226 are enriched in polar residues; that stretch reads SYTTASTPSRPTFNVQVRTA. Residues 365–377 are compositionally biased toward low complexity; the sequence is SGYPSSGPTSSTP. LIM zinc-binding domains follow at residues 406 to 465, 466 to 526, and 527 to 595; these read GRCA…INTL, EQCS…KFAP, and RCSV…RIQA.

The protein belongs to the zyxin/ajuba family.

It localises to the nucleus. The protein localises to the cytoplasm. The protein resides in the cell junction. Functionally, may play a structural role at sites of cell adhesion in maintaining cell shape and motility. May be involved in signal transduction from cell adhesion sites to the nucleus. This is Lipoma-preferred partner homolog (LPP) from Gallus gallus (Chicken).